We begin with the raw amino-acid sequence, 543 residues long: Pectate disaccharide-lyase (543 aa).

The protein belongs to the polysaccharide lyase 2 family. Requires Cu cation as cofactor. It depends on Mn(2+) as a cofactor. Ni(2+) serves as cofactor.

The protein localises to the cytoplasm. The catalysed reaction is [(1-&gt;4)-alpha-D-galacturonosyl](n) = 4-(4-deoxy-alpha-D-galact-4-enuronosyl)-D-galacturonate + [(1-&gt;4)-alpha-D-galacturonosyl](n-2). Its pathway is glycan metabolism; pectin degradation. In terms of biological role, catalyzes the formation of unsaturated digalacturonates from polygalacturonate or short oligogalacturonates. The protein is Pectate disaccharide-lyase (pelW) of Dickeya dadantii (strain 3937) (Erwinia chrysanthemi (strain 3937)).